Consider the following 2055-residue polypeptide: Citron rho-interacting kinase (2055 aa).

The region spanning phenylalanine 97 to phenylalanine 359 is the Protein kinase domain. ATP-binding positions include valine 103–valine 111 and lysine 126. Catalysis depends on aspartate 221, which acts as the Proton acceptor. Residues alanine 360–serine 430 enclose the AGC-kinase C-terminal domain. Residues valine 375–serine 398 are disordered. 3 coiled-coil regions span residues leucine 457 to serine 747, isoleucine 773 to glutamine 1238, and tyrosine 1284 to glutamate 1318. The segment at proline 1349–serine 1376 is disordered. Residues proline 1353–serine 1363 show a composition bias toward low complexity. Positions arginine 1365–serine 1376 are enriched in basic and acidic residues. The Phorbol-ester/DAG-type zinc finger occupies proline 1388–cysteine 1437. Residues serine 1469–alanine 1589 enclose the PH domain. The CNH domain occupies arginine 1617–glycine 1907. Residues serine 1932 to arginine 2040 form a disordered region. A compositionally biased stretch (polar residues) spans valine 1939–asparagine 1948. Residues serine 1974–arginine 2031 are compositionally biased toward basic and acidic residues.

This sequence belongs to the protein kinase superfamily. AGC Ser/Thr protein kinase family. As to quaternary structure, homodimer. Directly interacts with KIF14 depending on the activation state (stronger interaction with the kinase-dead form). Interacts with TTC3.

The protein localises to the cytoplasm. It carries out the reaction L-seryl-[protein] + ATP = O-phospho-L-seryl-[protein] + ADP + H(+). The catalysed reaction is L-threonyl-[protein] + ATP = O-phospho-L-threonyl-[protein] + ADP + H(+). Its function is as follows. Plays a role in cytokinesis. Required for KIF14 localization to the central spindle and midbody. Putative RHO/RAC effector that binds to the GTP-bound forms of RHO and RAC1. It probably binds p21 with a tighter specificity in vivo. Displays serine/threonine protein kinase activity. Plays an important role in the regulation of cytokinesis and the development of the central nervous system. Phosphorylates MYL9/MLC2. This is Citron rho-interacting kinase from Rattus norvegicus (Rat).